The chain runs to 372 residues: Ubl carboxyl-terminal hydrolase 18 (372 aa).

The disordered stretch occupies residues 19–45 (SSQSPADLEEKKEEDSNMKREQPRERP). Positions 26 to 45 (LEEKKEEDSNMKREQPRERP) are enriched in basic and acidic residues. Positions 36 to 51 (MKREQPRERPRAWDYP) are mediates interaction with IFNAR2. A mediates interaction with STAT2 region spans residues 51 to 112 (PHGLVGLHNI…MLLLLEKMQD (62 aa)). The USP domain occupies 55-370 (VGLHNIGQTC…TAYLLVYMKM (316 aa)). Cys-64 (nucleophile) is an active-site residue. The tract at residues 303 to 312 (ELFAVIAHVG) is mediates interaction with STAT2 and necessary for the negative regulation of the type I IFN signaling pathway. The interval 313–372 (MADSGHYCVYIRNAVDGKWFCFNDSNICLVSWEDIQCTYGNPNYHWQETAYLLVYMKMEC) is mediates interaction with IFNAR2. His-318 acts as the Proton acceptor in catalysis.

It belongs to the peptidase C19 family. In terms of assembly, interacts with STAT2; the interaction is direct. Interacts with IFNAR2; indirectly via STAT2, it negatively regulates the assembly of the ternary interferon-IFNAR1-IFNAR2 complex and inhibits type I interferon signaling. Interacts with STING1. Interacts with USP20.

The protein resides in the cytoplasm. Its subcellular location is the nucleus. The catalysed reaction is Thiol-dependent hydrolysis of ester, thioester, amide, peptide and isopeptide bonds formed by the C-terminal Gly of ubiquitin (a 76-residue protein attached to proteins as an intracellular targeting signal).. In terms of biological role, interferon-induced ISG15-specific protease that plays a crucial role for maintaining a proper balance of ISG15-conjugated proteins in cells. Regulates protein ISGylation by efficiently cleaving ISG15 conjugates linked via isopeptide bonds. Regulates T-cell activation and T-helper 17 (Th17) cell differentiation by deubiquitinating TAK1, likely to keep TAK1-TAB complexes in steady conditions. In turn, restricts activation of NF-kappa-B, NFAT, and JNK as well as expression of IL2 in T-cells after TCR activation. Acts as a molecular adapter with USP20 to promote innate antiviral response through deubiquitinating STING1. Involved also in the negative regulation of the inflammatory response triggered by type I interferon. Upon recruitment by STAT2 to the type I interferon receptor subunit IFNAR2 interferes with the assembly of the ternary interferon-IFNAR1-IFNAR2 complex and acts as a negative regulator of the type I interferon signaling pathway. Functionally, has enzymatic activity similar to isoform 1 and interferes with type I interferon signaling. Major deISGylation enzyme for nuclear proteins. In Homo sapiens (Human), this protein is Ubl carboxyl-terminal hydrolase 18 (USP18).